Consider the following 447-residue polypeptide: Methylenetetrahydrofolate--tRNA-(uracil-5-)-methyltransferase TrmFO (447 aa).

10–15 contacts FAD; the sequence is GAGLAG.

The protein belongs to the MnmG family. TrmFO subfamily. Requires FAD as cofactor.

Its subcellular location is the cytoplasm. The enzyme catalyses uridine(54) in tRNA + (6R)-5,10-methylene-5,6,7,8-tetrahydrofolate + NADH + H(+) = 5-methyluridine(54) in tRNA + (6S)-5,6,7,8-tetrahydrofolate + NAD(+). It carries out the reaction uridine(54) in tRNA + (6R)-5,10-methylene-5,6,7,8-tetrahydrofolate + NADPH + H(+) = 5-methyluridine(54) in tRNA + (6S)-5,6,7,8-tetrahydrofolate + NADP(+). Functionally, catalyzes the folate-dependent formation of 5-methyl-uridine at position 54 (M-5-U54) in all tRNAs. The protein is Methylenetetrahydrofolate--tRNA-(uracil-5-)-methyltransferase TrmFO of Lactococcus lactis subsp. lactis (strain IL1403) (Streptococcus lactis).